The chain runs to 285 residues: MSNVLKGKPVADKISEGLIQEVEVLKEKGITPKLAILRVGARGDDLAYEKGALSRCAKIGIDTEVKEFPEDITQEDFIEALRKTNGDPSIHGILIFRPLPKQLNEDVIKYEIAAEKDIDCLSPINAAKLLEGDDTGFPPCTPMAVIEILKHYEVQMEGKKAVVLGRSMVVGKPAALLLLKENATVTICHSRTKELSSVTKEGDILVAAIGKDRFVKEDFIKEGAVVIDVGINVDAEGNMYGDVDFEGCKEKAGMITPVPAGVGSVTTSILAKHVLKACRLQHNIY.

NADP(+)-binding positions include 165-167 (GRS), Ser190, and Ile231.

This sequence belongs to the tetrahydrofolate dehydrogenase/cyclohydrolase family. Homodimer.

It carries out the reaction (6R)-5,10-methylene-5,6,7,8-tetrahydrofolate + NADP(+) = (6R)-5,10-methenyltetrahydrofolate + NADPH. It catalyses the reaction (6R)-5,10-methenyltetrahydrofolate + H2O = (6R)-10-formyltetrahydrofolate + H(+). It functions in the pathway one-carbon metabolism; tetrahydrofolate interconversion. Catalyzes the oxidation of 5,10-methylenetetrahydrofolate to 5,10-methenyltetrahydrofolate and then the hydrolysis of 5,10-methenyltetrahydrofolate to 10-formyltetrahydrofolate. In Alkaliphilus oremlandii (strain OhILAs) (Clostridium oremlandii (strain OhILAs)), this protein is Bifunctional protein FolD.